We begin with the raw amino-acid sequence, 431 residues long: Glucose-1-phosphate adenylyltransferase (431 aa).

Lys-39 lines the beta-D-fructose 1,6-bisphosphate pocket. Arg-40, His-46, and Arg-52 together coordinate AMP. Tyr-114 is a binding site for alpha-D-glucose 1-phosphate. An AMP-binding site is contributed by Arg-130. Residues Gly-179, 194–195, and Ser-212 each bind alpha-D-glucose 1-phosphate; that span reads EK. AMP-binding residues include Glu-370 and Arg-386. Beta-D-fructose 1,6-bisphosphate contacts are provided by residues 419–423 and 429–431; these read REMLR and QER.

The protein belongs to the bacterial/plant glucose-1-phosphate adenylyltransferase family. Homotetramer.

The catalysed reaction is alpha-D-glucose 1-phosphate + ATP + H(+) = ADP-alpha-D-glucose + diphosphate. The protein operates within glycan biosynthesis; glycogen biosynthesis. Allosterically activated by fructose-1,6-bisphosphate (F16BP) and inhibited by AMP. Functionally, involved in the biosynthesis of ADP-glucose, a building block required for the elongation reactions to produce glycogen. Catalyzes the reaction between ATP and alpha-D-glucose 1-phosphate (G1P) to produce pyrophosphate and ADP-Glc. This chain is Glucose-1-phosphate adenylyltransferase, found in Salmonella paratyphi C (strain RKS4594).